The primary structure comprises 1311 residues: Suppressor of presenilin protein 4 (1311 aa).

Residues methionine 1–serine 11 are compositionally biased toward polar residues. 2 disordered regions span residues methionine 1–asparagine 58 and methionine 75–histidine 95. 2 C2H2-type zinc fingers span residues histidine 112–histidine 134 and phenylalanine 141–histidine 163. A disordered region spans residues glutamate 226 to lysine 304. A compositionally biased stretch (low complexity) spans serine 280 to valine 293. 4 C2H2-type zinc fingers span residues glutamine 327–histidine 349, tyrosine 355–histidine 379, lysine 451–histidine 476, and phenylalanine 487–histidine 510. The disordered stretch occupies residues valine 544–serine 563. Acidic residues predominate over residues aspartate 552–phenylalanine 561. C2H2-type zinc fingers lie at residues phenylalanine 585–histidine 607, phenylalanine 613–histidine 635, phenylalanine 709–histidine 731, tyrosine 737–histidine 759, tyrosine 794–histidine 816, and asparagine 823–histidine 845. The segment at arginine 865–glutamate 1002 is disordered. Over residues asparagine 874–valine 897 the composition is skewed to basic and acidic residues. Acidic residues predominate over residues glycine 898–serine 907. Residues valine 908–arginine 920 are compositionally biased toward basic and acidic residues. A compositionally biased stretch (polar residues) spans asparagine 956–asparagine 979. 6 consecutive C2H2-type zinc fingers follow at residues leucine 1022–histidine 1044, tyrosine 1053–histidine 1075, tyrosine 1104–histidine 1126, lysine 1162–histidine 1184, tyrosine 1190–histidine 1212, and leucine 1261–histidine 1284.

In terms of tissue distribution, expressed in neurons.

The protein localises to the nucleus. In terms of biological role, probable transcriptional regulator, which participates in the transcriptional repression of the presenilin protein hop-1. Might play a role in the oxidative stress response. The polypeptide is Suppressor of presenilin protein 4 (spr-4) (Caenorhabditis elegans).